The primary structure comprises 287 residues: tRNA pseudouridine synthase B (287 aa).

Aspartate 37 serves as the catalytic Nucleophile.

The protein belongs to the pseudouridine synthase TruB family. Type 1 subfamily.

The catalysed reaction is uridine(55) in tRNA = pseudouridine(55) in tRNA. In terms of biological role, responsible for synthesis of pseudouridine from uracil-55 in the psi GC loop of transfer RNAs. This chain is tRNA pseudouridine synthase B, found in Caldicellulosiruptor saccharolyticus (strain ATCC 43494 / DSM 8903 / Tp8T 6331).